The following is a 435-amino-acid chain: Transcriptional enhancer factor TEF-5 (435 aa).

Positions 1–12 (MASNSWNASSSP) are enriched in polar residues. Residues 1 to 34 (MASNSWNASSSPGEAREDGPEGLDKGLDNDAEGV) form a disordered region. An N-acetylalanine modification is found at Ala-2. Residues 14–28 (EAREDGPEGLDKGLD) are compositionally biased toward basic and acidic residues. Residues 28-104 (DNDAEGVWSP…QVLARKKVRE (77 aa)) constitute a DNA-binding region (TEA). Ser-148 carries the phosphoserine modification. Residues 173–435 (GPSQDIKPFA…QHHVYKLVKD (263 aa)) form a transcriptional activation region.

As to quaternary structure, interacts with YAP1 and WWTR1/TAZ. As to expression, preferentially expressed in the placenta.

The protein localises to the nucleus. Transcription factor which plays a key role in the Hippo signaling pathway, a pathway involved in organ size control and tumor suppression by restricting proliferation and promoting apoptosis. The core of this pathway is composed of a kinase cascade wherein MST1/MST2, in complex with its regulatory protein SAV1, phosphorylates and activates LATS1/2 in complex with its regulatory protein MOB1, which in turn phosphorylates and inactivates YAP1 oncoprotein and WWTR1/TAZ. Acts by mediating gene expression of YAP1 and WWTR1/TAZ, thereby regulating cell proliferation, migration and epithelial mesenchymal transition (EMT) induction. Binds to multiple functional elements of the human chorionic somatomammotropin-B gene enhancer. The polypeptide is Transcriptional enhancer factor TEF-5 (TEAD3) (Homo sapiens (Human)).